We begin with the raw amino-acid sequence, 493 residues long: 6-aminohexanoate-cyclic-dimer hydrolase (493 aa).

Active-site charge relay system residues include lysine 72 and serine 150. Residue serine 174 is the Acyl-ester intermediate of the active site.

The protein belongs to the amidase family. In terms of assembly, homodimer.

The catalysed reaction is 1,8-diazacyclotetradecane-2,9-dione + H2O = N-(6-aminohexanoyl)-6-aminohexanoate. Its pathway is xenobiotic degradation; nylon-6 oligomer degradation. Strongly inhibited by 1 uM diisopropylphosphofluoridate and 10 uM p-chloromercuribenzoate but scarcely inhibited by 100 mM EDTA in vitro. Functionally, specifically catalyzes the hydrolysis of 6-aminohexanoic acid cyclic dimer (1,8-diazacyclotetradecane-2,9-dione) to form the linear dimer 6-aminohexanoyl-6-aminohexanoic acid. Is inactive on 6-aminohexanoic acid oligomers (degree of polymerization 2 to 6), various other cyclic amides, cyclic diamides, linear amides, oligopeptides, and casein. Allows the bacterium to grow on a medium containing 6-aminohexanoic acid cyclic dimer as the sole carbon and nitrogen sources. The sequence is that of 6-aminohexanoate-cyclic-dimer hydrolase (nylA) from Paenarthrobacter ureafaciens.